The sequence spans 842 residues: Protein P (842 aa).

Residues 1 to 177 are terminal protein domain (TP); the sequence is MPLSYQHFRR…FCGSPYSWEQ (177 aa). Positions 178–345 are spacer; the sequence is ELHHGAFLDG…YCLSHLVNLL (168 aa). The tract at residues 186 to 273 is disordered; the sequence is DGPSRMGEES…AKNIASRSAS (88 aa). Residues 223-239 are compositionally biased toward polar residues; sequence GPQSQQRPLDRSQQGRS. The interval 346 to 689 is polymerase/reverse transcriptase domain (RT); the sequence is EDWGPCTEHG…YLNLYPVARQ (344 aa). In terms of domain architecture, Reverse transcriptase spans 356–599; it reads RHHIRIPRTP…YSLNFMGYVI (244 aa). Positions 428, 550, and 551 each coordinate Mg(2+).

This sequence belongs to the hepadnaviridae P protein family.

It carries out the reaction DNA(n) + a 2'-deoxyribonucleoside 5'-triphosphate = DNA(n+1) + diphosphate. The catalysed reaction is Endonucleolytic cleavage to 5'-phosphomonoester.. Activated by host HSP70 and HSP40 in vitro to be able to bind the epsilon loop of the pgRNA. Because deletion of the RNase H region renders the protein partly chaperone-independent, the chaperones may be needed indirectly to relieve occlusion of the RNA-binding site by this domain. Inhibited by several reverse-transcriptase inhibitors: Lamivudine, Adefovir and Entecavir. Multifunctional enzyme that converts the viral RNA genome into dsDNA in viral cytoplasmic capsids. This enzyme displays a DNA polymerase activity that can copy either DNA or RNA templates, and a ribonuclease H (RNase H) activity that cleaves the RNA strand of RNA-DNA heteroduplexes in a partially processive 3'- to 5'-endonucleasic mode. Neo-synthesized pregenomic RNA (pgRNA) are encapsidated together with the P protein, and reverse-transcribed inside the nucleocapsid. Initiation of reverse-transcription occurs first by binding the epsilon loop on the pgRNA genome, and is initiated by protein priming, thereby the 5'-end of (-)DNA is covalently linked to P protein. Partial (+)DNA is synthesized from the (-)DNA template and generates the relaxed circular DNA (RC-DNA) genome. After budding and infection, the RC-DNA migrates in the nucleus, and is converted into a plasmid-like covalently closed circular DNA (cccDNA). The activity of P protein does not seem to be necessary for cccDNA generation, and is presumably released from (+)DNA by host nuclear DNA repair machinery. This is Protein P from Homo sapiens (Human).